A 412-amino-acid polypeptide reads, in one-letter code: Adenosine receptor A2a (412 aa).

The Extracellular segment spans residues 1–7; sequence MPTVGSL. A helical membrane pass occupies residues 8 to 32; that stretch reads VYIMVELAIALLAILGNMLVCWAVW. The Cytoplasmic portion of the chain corresponds to 33-42; it reads LNSNLQNVTN. A helical transmembrane segment spans residues 43 to 66; sequence YFVVSLAAADIAVGVLAIPFAITI. Residues 67–77 are Extracellular-facing; it reads STGFCAACHGC. 3 cysteine pairs are disulfide-bonded: cysteine 71-cysteine 159, cysteine 74-cysteine 146, and cysteine 77-cysteine 166. Residues 78 to 100 form a helical membrane-spanning segment; that stretch reads LFIACFVLVLTQSSIFSLLAIAI. The Cytoplasmic portion of the chain corresponds to 101–120; it reads DRYIAIRIPLRYNGLVTGTR. A helical membrane pass occupies residues 121-143; sequence AKGVIAVCWVLSFAIGLTPMLGW. Residues 144-173 are Extracellular-facing; sequence NNCHHWGEGENQSQGCGEGQVACLFEDVVP. Residue asparagine 154 is glycosylated (N-linked (GlcNAc...) asparagine). An adenosine-binding site is contributed by glutamate 169. A helical membrane pass occupies residues 174–198; it reads MNYMVYYNFFACVLVPLLLMLGVYL. Residues 199-234 are Cytoplasmic-facing; it reads RIFLAARRQLKQMETQPLPGERARSTLQKEVHAAKS. The helical transmembrane segment at 235–258 threads the bilayer; the sequence is LAIIVGLFALCWLPLHIINCFTFF. Asparagine 253 contributes to the adenosine binding site. Cysteine 259 and cysteine 262 form a disulfide bridge. Over 259–266 the chain is Extracellular; sequence CPECPHAP. Residues 267-290 traverse the membrane as a helical segment; it reads LWLMYPAIILSHFNSVVNPFIYAY. Serine 277 and histidine 278 together coordinate adenosine. At 291–412 the chain is on the cytoplasmic side; the sequence is RIREFRHTFH…PLAQDGAGVS (122 aa). The tract at residues 368–412 is disordered; sequence RASARESPGDTGLPDVELLSHELHGASPESPGLEGPLAQDGAGVS.

It belongs to the G-protein coupled receptor 1 family. As to quaternary structure, interacts (via cytoplasmic C-terminal domain) with USP4; the interaction is direct. May interact with DRD4. Interacts with NECAB2. Interacts (via cytoplasmic C-terminal domain) with GAS2L2; interaction enhances receptor-mediated adenylyl cyclase activity. Ubiquitinated. Deubiquitinated by USP4; leading to stabilization and expression at the cell surface.

It localises to the cell membrane. Its function is as follows. Receptor for adenosine. The activity of this receptor is mediated by G proteins which activate adenylyl cyclase. This Equus caballus (Horse) protein is Adenosine receptor A2a (ADORA2A).